The chain runs to 209 residues: rRNA N(6)-adenosine-methyltransferase METTL5 (209 aa).

Residues Gln28, Thr31, Gly59, Cys62, Val64, Asp81, and 108 to 109 each bind S-adenosyl-L-methionine; that span reads DV.

The protein belongs to the methyltransferase superfamily. PrmA family. As to quaternary structure, heterodimer; heterodimerizes with TRMT112. Ubiquitously expressed in brain.

The protein resides in the nucleus. The protein localises to the presynapse. It localises to the postsynapse. The catalysed reaction is adenosine(1832) in 18S rRNA + S-adenosyl-L-methionine = N(6)-methyladenosine(1832) in 18S rRNA + S-adenosyl-L-homocysteine + H(+). With respect to regulation, rRNA N6-adenosine-methyltransferase activity is inhibited by zinc. Its function is as follows. Catalytic subunit of a heterodimer with TRMT112, which specifically methylates the 6th position of adenine in position 1832 of 18S rRNA. N6-methylation of adenine(1832) in 18S rRNA resides in the decoding center of 18S rRNA and is required for translation and embryonic stem cells (ESCs) pluripotency and differentiation. This chain is rRNA N(6)-adenosine-methyltransferase METTL5, found in Mus musculus (Mouse).